The sequence spans 342 residues: N-acetyl-gamma-glutamyl-phosphate reductase (342 aa).

Cys146 is an active-site residue.

It belongs to the NAGSA dehydrogenase family. Type 1 subfamily.

It localises to the cytoplasm. It catalyses the reaction N-acetyl-L-glutamate 5-semialdehyde + phosphate + NADP(+) = N-acetyl-L-glutamyl 5-phosphate + NADPH + H(+). Its pathway is amino-acid biosynthesis; L-arginine biosynthesis; N(2)-acetyl-L-ornithine from L-glutamate: step 3/4. Functionally, catalyzes the NADPH-dependent reduction of N-acetyl-5-glutamyl phosphate to yield N-acetyl-L-glutamate 5-semialdehyde. The chain is N-acetyl-gamma-glutamyl-phosphate reductase from Streptomyces coelicolor (strain ATCC BAA-471 / A3(2) / M145).